Here is a 583-residue protein sequence, read N- to C-terminus: ATP-dependent lipid A-core flippase (583 aa).

The next 5 membrane-spanning stretches (helical) occupy residues 27-47 (LAVA…MVSL), 69-89 (LLVF…TYCL), 142-162 (ALVS…LMFY), 165-185 (WQLS…IGFV), and 249-269 (AAAN…VLYL). The 283-residue stretch at 28–310 (AVAVVALIIN…LTNVTSQFQR (283 aa)) folds into the ABC transmembrane type-1 domain. Residues 342-578 (VNVKDISFTY…DGAYAQLHRI (237 aa)) enclose the ABC transporter domain. 376 to 383 (GRSGSGKS) contributes to the ATP binding site.

The protein belongs to the ABC transporter superfamily. Lipid exporter (TC 3.A.1.106) family. In terms of assembly, homodimer.

It is found in the cell inner membrane. The catalysed reaction is ATP + H2O + lipid A-core oligosaccharideSide 1 = ADP + phosphate + lipid A-core oligosaccharideSide 2.. Involved in lipopolysaccharide (LPS) biosynthesis. Translocates lipid A-core from the inner to the outer leaflet of the inner membrane. Transmembrane domains (TMD) form a pore in the inner membrane and the ATP-binding domain (NBD) is responsible for energy generation. This Vibrio vulnificus (strain CMCP6) protein is ATP-dependent lipid A-core flippase.